Here is a 190-residue protein sequence, read N- to C-terminus: Crossover junction endodeoxyribonuclease RuvC (190 aa).

Catalysis depends on residues Asp7, Glu68, and Asp141. Asp7, Glu68, and Asp141 together coordinate Mg(2+).

It belongs to the RuvC family. In terms of assembly, homodimer which binds Holliday junction (HJ) DNA. The HJ becomes 2-fold symmetrical on binding to RuvC with unstacked arms; it has a different conformation from HJ DNA in complex with RuvA. In the full resolvosome a probable DNA-RuvA(4)-RuvB(12)-RuvC(2) complex forms which resolves the HJ. Mg(2+) is required as a cofactor.

The protein resides in the cytoplasm. The catalysed reaction is Endonucleolytic cleavage at a junction such as a reciprocal single-stranded crossover between two homologous DNA duplexes (Holliday junction).. In terms of biological role, the RuvA-RuvB-RuvC complex processes Holliday junction (HJ) DNA during genetic recombination and DNA repair. Endonuclease that resolves HJ intermediates. Cleaves cruciform DNA by making single-stranded nicks across the HJ at symmetrical positions within the homologous arms, yielding a 5'-phosphate and a 3'-hydroxyl group; requires a central core of homology in the junction. The consensus cleavage sequence is 5'-(A/T)TT(C/G)-3'. Cleavage occurs on the 3'-side of the TT dinucleotide at the point of strand exchange. HJ branch migration catalyzed by RuvA-RuvB allows RuvC to scan DNA until it finds its consensus sequence, where it cleaves and resolves the cruciform DNA. The sequence is that of Crossover junction endodeoxyribonuclease RuvC from Endomicrobium trichonymphae.